A 71-amino-acid chain; its full sequence is MPVIKVRENESFDVALRRFKRSCEKAGLLAEVRAREFYEKPTTIRKREKASLAKRHAKRNARENARNTRLY.

The segment covering 48-59 has biased composition (basic residues); that stretch reads EKASLAKRHAKR. The interval 48–71 is disordered; that stretch reads EKASLAKRHAKRNARENARNTRLY. The span at 60-71 shows a compositional bias: basic and acidic residues; sequence NARENARNTRLY.

This sequence belongs to the bacterial ribosomal protein bS21 family.

This chain is Small ribosomal subunit protein bS21, found in Actinobacillus pleuropneumoniae serotype 5b (strain L20).